Consider the following 609-residue polypeptide: UvrABC system protein C (609 aa).

A GIY-YIG domain is found at 16-94 (SSPGVYRMYD…IKQYMPKYNV (79 aa)). Residues 203–238 (HQVMSVLVGKMEQAASDMRYEQAALYRDQITALRRV) form the UVR domain.

The protein belongs to the UvrC family. In terms of assembly, interacts with UvrB in an incision complex.

It is found in the cytoplasm. Its function is as follows. The UvrABC repair system catalyzes the recognition and processing of DNA lesions. UvrC both incises the 5' and 3' sides of the lesion. The N-terminal half is responsible for the 3' incision and the C-terminal half is responsible for the 5' incision. The sequence is that of UvrABC system protein C from Shewanella halifaxensis (strain HAW-EB4).